A 325-amino-acid chain; its full sequence is Biotin synthase (325 aa).

One can recognise a Radical SAM core domain in the interval 42–270 (YKVQLASLLS…QSRVRLSAGR (229 aa)). Residues Cys57, Cys61, and Cys64 each coordinate [4Fe-4S] cluster. [2Fe-2S] cluster is bound by residues Cys101, Cys133, Cys193, and Arg265.

This sequence belongs to the radical SAM superfamily. Biotin synthase family. Homodimer. It depends on [4Fe-4S] cluster as a cofactor. [2Fe-2S] cluster serves as cofactor.

The enzyme catalyses (4R,5S)-dethiobiotin + (sulfur carrier)-SH + 2 reduced [2Fe-2S]-[ferredoxin] + 2 S-adenosyl-L-methionine = (sulfur carrier)-H + biotin + 2 5'-deoxyadenosine + 2 L-methionine + 2 oxidized [2Fe-2S]-[ferredoxin]. The protein operates within cofactor biosynthesis; biotin biosynthesis; biotin from 7,8-diaminononanoate: step 2/2. Functionally, catalyzes the conversion of dethiobiotin (DTB) to biotin by the insertion of a sulfur atom into dethiobiotin via a radical-based mechanism. The protein is Biotin synthase of Synechococcus sp. (strain WH7803).